Here is a 303-residue protein sequence, read N- to C-terminus: Serine/threonine-protein phosphatase PP-X homolog 1 (303 aa).

Mn(2+)-binding residues include aspartate 51, histidine 53, aspartate 79, and asparagine 111. The active-site Proton donor is histidine 112. 2 residues coordinate Mn(2+): histidine 161 and histidine 235.

It belongs to the PPP phosphatase family. PP-4 (PP-X) subfamily. Requires Mn(2+) as cofactor.

It carries out the reaction O-phospho-L-seryl-[protein] + H2O = L-seryl-[protein] + phosphate. The catalysed reaction is O-phospho-L-threonyl-[protein] + H2O = L-threonyl-[protein] + phosphate. The chain is Serine/threonine-protein phosphatase PP-X homolog 1 (Ppx1) from Paramecium tetraurelia.